Here is a 301-residue protein sequence, read N- to C-terminus: MKIGILSRNQSLYSTSRLIEAAESRGHEVKVIDALRCYMNINSEKPQIHFKGEELVDYDAIIPRIGASVTFYGTAVLRQFEMMGVYPVNESVAITRSRDKLRSMQLLSRKGIGMPITGFASKPDDVKDLLDMVGGAPVVIKLLEGTQGIGVVLAETRKAAESVVEAFMGLKANIMVQEFIKEAGGADIRCFVIGGKVIAAMKRQGAEGEFRSNLHRGGSASLVKLTPEERKTAVAAANIMGLNVAGVDLLRSERGPLVMEVNSSPGLEGIEKATGKDVAGLIIDFIEKTAATKRTKTRGKG.

One can recognise an ATP-grasp domain in the interval 104 to 287 (MQLLSRKGIG…VAGLIIDFIE (184 aa)). Residues Lys141, 178–179 (EF), Asp187, and 211–213 (RSN) each bind ATP. Positions 248, 260, and 262 each coordinate Mg(2+). Mn(2+) is bound by residues Asp248, Glu260, and Asn262.

It belongs to the RimK family. It depends on Mg(2+) as a cofactor. Mn(2+) serves as cofactor.

This Aliivibrio fischeri (strain MJ11) (Vibrio fischeri) protein is Probable alpha-L-glutamate ligase.